We begin with the raw amino-acid sequence, 129 residues long: MEIVSDKKISEKGIASAAELLYKGAKMLAHSCPECKMPLFEKDGKIFCPSCGREVVIEEDSAAKAESEEKPPESTKPAVKADYDEAVEKIEMAISKVCDMMVESRSVEEVRVLSDSLEKLVDALKKLRE.

The interval 61–80 (SAAKAESEEKPPESTKPAVK) is disordered.

This sequence belongs to the UPF0148 family.

This Archaeoglobus fulgidus (strain ATCC 49558 / DSM 4304 / JCM 9628 / NBRC 100126 / VC-16) protein is UPF0148 protein AF_2370.